Here is a 274-residue protein sequence, read N- to C-terminus: Thiamine kinase (274 aa).

It belongs to the thiamine kinase family.

It carries out the reaction thiamine + ATP = thiamine phosphate + ADP + H(+). The protein operates within cofactor biosynthesis; thiamine diphosphate biosynthesis; thiamine phosphate from thiamine: step 1/1. Its function is as follows. Catalyzes the ATP-dependent phosphorylation of thiamine to thiamine phosphate. Is involved in thiamine salvage. This Shigella sonnei (strain Ss046) protein is Thiamine kinase.